A 302-amino-acid polypeptide reads, in one-letter code: Small ribosomal subunit protein uS3 (302 aa).

Positions 17–86 (IDEFFAEELA…DPQIDVQEVE (70 aa)) constitute a KH type-2 domain. The tract at residues 222–302 (EDADAEDADA…EMDDEDGGAE (81 aa)) is disordered.

This sequence belongs to the universal ribosomal protein uS3 family. Part of the 30S ribosomal subunit.

In terms of biological role, binds the lower part of the 30S subunit head. The chain is Small ribosomal subunit protein uS3 from Halobacterium salinarum (strain ATCC 700922 / JCM 11081 / NRC-1) (Halobacterium halobium).